The sequence spans 399 residues: Argininosuccinate synthase (399 aa).

Residues 10–18 and A38 contribute to the ATP site; that span reads AYSGGVDTS. L-citrulline is bound at residue Y89. G119 is a binding site for ATP. Residues T121, N125, and D126 each coordinate L-aspartate. N125 serves as a coordination point for L-citrulline. L-citrulline is bound by residues R129, S177, S186, E262, and Y274.

It belongs to the argininosuccinate synthase family. Type 1 subfamily. As to quaternary structure, homotetramer.

It localises to the cytoplasm. It catalyses the reaction L-citrulline + L-aspartate + ATP = 2-(N(omega)-L-arginino)succinate + AMP + diphosphate + H(+). It participates in amino-acid biosynthesis; L-arginine biosynthesis; L-arginine from L-ornithine and carbamoyl phosphate: step 2/3. The sequence is that of Argininosuccinate synthase from Acaryochloris marina (strain MBIC 11017).